The sequence spans 317 residues: Olfactory receptor 2F1 (317 aa).

Over Met-1–Arg-24 the chain is Extracellular. Asn-5 carries an N-linked (GlcNAc...) asparagine glycan. A helical membrane pass occupies residues Val-25 to Leu-48. The Cytoplasmic portion of the chain corresponds to Ile-49 to Thr-57. Residues Pro-58–Pro-79 form a helical membrane-spanning segment. At Gln-80–Gln-100 the chain is on the extracellular side. Residues Cys-97 and Cys-189 are joined by a disulfide bond. A helical transmembrane segment spans residues Leu-101 to Tyr-120. Over Asp-121 to Gly-139 the chain is Cytoplasmic. A helical transmembrane segment spans residues Leu-140–Thr-160. At Ala-161–Met-200 the chain is on the extracellular side. A helical transmembrane segment spans residues Val-201–Ile-222. Topologically, residues Ser-223–Lys-236 are cytoplasmic. Residues Ala-237–Gln-261 traverse the membrane as a helical segment. Residues Pro-262–Lys-272 lie on the Extracellular side of the membrane. A helical transmembrane segment spans residues Leu-273–Leu-292. The Cytoplasmic portion of the chain corresponds to Arg-293–Thr-317.

Belongs to the G-protein coupled receptor 1 family.

It is found in the cell membrane. Its function is as follows. Odorant receptor. The sequence is that of Olfactory receptor 2F1 (OR2F1) from Homo sapiens (Human).